A 294-amino-acid polypeptide reads, in one-letter code: Aquaporin-B (294 aa).

A disordered region spans residues 1-31; the sequence is MSLKRSDDYQDLEEGIAMEDGGNIKDEEEKP. Topologically, residues 1 to 42 are cytoplasmic; the sequence is MSLKRSDDYQDLEEGIAMEDGGNIKDEEEKPLDPIEEQNKKR. Over residues 22–31 the composition is skewed to basic and acidic residues; it reads GNIKDEEEKP. A helical membrane pass occupies residues 43–63; that stretch reads WVLIRAVLGELLCTFLFVYVL. The Extracellular portion of the chain corresponds to 64–79; sequence CATSANFIRLGSPPNP. An O-linked (GalNAc...) serine glycan is attached at Ser75. Residues 80 to 100 traverse the membrane as a helical segment; sequence VVGGLSTGFAAVALIYSFADV. Residues 101 to 123 lie on the Cytoplasmic side of the membrane; it reads SGAHFNPAVTFATCVTRKTSITK. The short motif at 106-108 is the NPA 1 element; the sequence is NPA. Residues 124 to 144 traverse the membrane as a helical segment; the sequence is GLMYVGAQLVGSVLASLILLA. Over 145–172 the chain is Extracellular; it reads TFPGNFPGDKNAASAVAIAPSTDANIGN. A helical membrane pass occupies residues 173-193; it reads AFLTELVLTFILVYVIFAVAF. Over 194-224 the chain is Cytoplasmic; it reads DTVDNSVKTKVVGKSSSNNLTIYTTSGQTKA. The interval 208-219 is required for water permeability; it reads SSSNNLTIYTTS. Residues 225-245 form a helical membrane-spanning segment; the sequence is GFAPIAIGFTLGFLCFLGGSV. Residues 246–268 lie on the Extracellular side of the membrane; the sequence is SGGAFNPARVFGTALVGNNWTRH. Residues 251–253 carry the NPA 2 motif; it reads NPA. A helical membrane pass occupies residues 269–289; sequence WMYWIADFLGAGLAGFAQKFF. Over 290–294 the chain is Cytoplasmic; sequence SSTHK.

The protein belongs to the MIP/aquaporin (TC 1.A.8) family. Glycosylated and non-glycosylated forms exist throughout all developmental stages.

It localises to the cell membrane. It is found in the cytoplasmic vesicle. Functionally, putatively gated water-specific channel, requiring a cysteine residue within the channel. Impermeable to water, glycerol and urea when expressed in Xenopus oocytes. Not regulated by pH; channels remain impermeable to water at pH 7.4 and 5.2. The protein is Aquaporin-B of Dictyostelium discoideum (Social amoeba).